The sequence spans 647 residues: MINITFPDGAVREFESGVTTFEIAQSISNSLAKKALAGKFNGKLIDTTRAITEDGSIEIVTPDHEDALPILRHSAAHLFAQAARRLFPDIHLGVGPAIEDGFYYDTDNTAGQISNEDLPRIEEEMQKIVKENFPSIREEVTKDEAREIFKNDPYKLELIEEHSEDEGGLTIYRQGEYVDLCRGPHVPSTGRIQIFHLLHVAGAYWRGNSDNAMMQRIYGTAWFDKKDLKNYLQMREEAKERDHRKLGKELDLFMISQEVGQGLPFWLPNGATIRRELERYIVNKELASGYQHVYTPPLASVELYKTSGHWDHYQEDMFPTMDMGDGEEFVLRPMNCPHHIQVFKHHVHSYRELPIRIAEIGMMHRYEKSGALTGLQRVREMSLNDGHLFVTPEQIQEEFQRALQLIIDVYEDFNLTDYRFRLSLRDPQDTHKYFDNDEMWENAQTMLRAALDEMGVDYFEAEGEAAFYGPKLDIQIKTALGKEETLSTIQLDFLLPERFDLKYIGADGEDHRPVMIHRGVISTMERFTAILIENYKGAFPTWLAPHQVTLIPVSNEKHVDYAWEVAKKLRDRGVRADVDERNEKMQFKIRASQTSKIPYQLIVGDKEMEDETVNVRRYGQKETQTVSVDNFVQAILADIANKSRVEK.

The region spanning 1-61 is the TGS domain; the sequence is MINITFPDGA…TEDGSIEIVT (61 aa). The segment at 242–540 is catalytic; sequence DHRKLGKELD…LIENYKGAFP (299 aa). Zn(2+) is bound by residues cysteine 336, histidine 387, and histidine 517.

The protein belongs to the class-II aminoacyl-tRNA synthetase family. As to quaternary structure, homodimer. The cofactor is Zn(2+).

It localises to the cytoplasm. The enzyme catalyses tRNA(Thr) + L-threonine + ATP = L-threonyl-tRNA(Thr) + AMP + diphosphate + H(+). Catalyzes the attachment of threonine to tRNA(Thr) in a two-step reaction: L-threonine is first activated by ATP to form Thr-AMP and then transferred to the acceptor end of tRNA(Thr). Also edits incorrectly charged L-seryl-tRNA(Thr). This is Threonine--tRNA ligase from Streptococcus pneumoniae (strain 70585).